Reading from the N-terminus, the 193-residue chain is Cysteine and glycine-rich protein 2 (193 aa).

An LIM zinc-binding 1 domain is found at 10-61 (CGACGRTVYHAEEVQCDGRTFHRCCFLCMVCRKNLDSTTVAIHDEEIYCKSC). The short motif at 64–69 (KKYGPK) is the Nuclear localization signal element. A Glycyl lysine isopeptide (Lys-Gly) (interchain with G-Cter in SUMO2) cross-link involves residue Lys-91. N6-acetyllysine occurs at positions 112 and 131. An LIM zinc-binding 2 domain is found at 119-170 (CSRCGDSVYAAEKIIGAGKPWHKNCFRCAKCGKSLESTTLTEKEGEIYCKGC). Lys-137 is modified (N6-acetyllysine; alternate). N6-succinyllysine; alternate is present on Lys-137. At Lys-161 the chain carries N6-acetyllysine.

As to quaternary structure, interacts with KAT14. The LIM domain 1 is necessary and sufficient for this interaction. Interacts with GLRX3. Highly expressed in the aorta; weakly found in the kidney, thymus, and intestine. Barely detectable in brain, testis, esophagus, lung, liver, aortic adventitia, vena cava, or uterus; not present in heart and skeletal muscle.

It localises to the nucleus. Functionally, drastically down-regulated in response to PDGF-BB or cell injury, that promote smooth muscle cell proliferation and dedifferentiation. Seems to play a role in the development of the embryonic vascular system. This is Cysteine and glycine-rich protein 2 (Csrp2) from Rattus norvegicus (Rat).